The primary structure comprises 85 residues: Large ribosomal subunit protein bL27 (85 aa).

A disordered region spans residues 1-21; it reads MAHKKAGGSSRNGRDSEGRRL.

Belongs to the bacterial ribosomal protein bL27 family.

The protein is Large ribosomal subunit protein bL27 of Rhodospirillum rubrum (strain ATCC 11170 / ATH 1.1.1 / DSM 467 / LMG 4362 / NCIMB 8255 / S1).